The chain runs to 301 residues: MAANYWVSTQRRHWLFTRERLADIREGFKERDKVAHSQFPLPDQRLLNIYFSQQLIKLGKRTTTRQQALATAQVYIKRFYTKNDIRHTNPYLVITTAFYLACKMEECPQHIRFVVAEARSFWPEFIAPDVSKLGECEFALISEMNSQLIVHHPYRTLSELTPELQLTSDEVALAWSVINDHYLTDLPLLYPPHVIAVMAIIVAVVFKPSQTSFHGSAGPALAGAMRDGGVNLLAALGDKNGNGPPRIQKLVGWLAESEVDIKAVIECTQELVSLYEIWEQYSEKHCKELLGRMVKSKNLDK.

A Cyclin N-terminal domain is found at 53–142; that stretch reads QQLIKLGKRT…LGECEFALIS (90 aa).

It belongs to the cyclin family. Cyclin C subfamily. In terms of assembly, component of the srb8-11 complex, a regulatory module of the Mediator complex.

The protein resides in the nucleus. Its function is as follows. Component of the srb8-11 complex. The srb8-11 complex is a regulatory module of the Mediator complex which is itself involved in regulation of basal and activated RNA polymerase II-dependent transcription. The srb8-11 complex may be involved in the transcriptional repression of a subset of genes regulated by Mediator. It may inhibit the association of the Mediator complex with RNA polymerase II to form the holoenzyme complex. The srb8-11 complex phosphorylates the C-terminal domain (CTD) of the largest subunit of RNA polymerase II. The sequence is that of RNA polymerase II holoenzyme cyclin-like subunit (ssn8) from Aspergillus terreus (strain NIH 2624 / FGSC A1156).